Reading from the N-terminus, the 788-residue chain is Cap-specific mRNA (nucleoside-2'-O-)-methyltransferase 1 (788 aa).

A G-patch domain is found at 25-71; sequence YSNKAMEMMKKMGYENDKGLGKSNQGRLEPIIAVQQDGRRGFGLKLD. Residues 143–147 and R158 contribute to the substrate site; that span reads KTVFD. The RrmJ-type SAM-dependent 2'-O-MTase domain maps to 171–384; that stretch reads IFLNRAAVKM…ERYLVCKYKR (214 aa). N174 is a binding site for S-adenosyl-L-methionine. K179 is a catalytic residue. 215-221 contributes to the S-adenosyl-L-methionine binding site; it reads CAGPGGF. D298 is a catalytic residue. Substrate is bound at residue 308–310; sequence NIQ. K338 serves as the catalytic Proton acceptor. Residue N373 coordinates substrate.

Interacts (via C-terminus) with r2d2 (via C-terminus).

It localises to the nucleus. It is found in the cytoplasm. The enzyme catalyses a 5'-end (N(7)-methyl 5'-triphosphoguanosine)-ribonucleoside in mRNA + S-adenosyl-L-methionine = a 5'-end (N(7)-methyl 5'-triphosphoguanosine)-(2'-O-methyl-ribonucleoside) in mRNA + S-adenosyl-L-homocysteine + H(+). S-adenosyl-L-methionine-dependent methyltransferase that mediates mRNA cap1 2'-O-ribose methylation to the 5'-cap structure of mRNAs. Methylates the ribose of the first nucleotide of a m(7)GpppG-capped mRNA to produce m(7)GpppNmp (cap1). Positively regulates the Ago2-dependent small RNA pathway, with roles in both siRNA biogenesis and RISC assembly. Involved in facilitating conversion of pre-RISC into holo-RISC, possibly by promoting the unwinding of Ago2-bound siRNA duplexes and thus the retention of the guide strand in holo-RISC. This Drosophila melanogaster (Fruit fly) protein is Cap-specific mRNA (nucleoside-2'-O-)-methyltransferase 1.